Here is a 427-residue protein sequence, read N- to C-terminus: Peptidase B (427 aa).

2 residues coordinate Mn(2+): lysine 195 and aspartate 200. Residue lysine 207 is part of the active site. Residues aspartate 218, aspartate 277, and glutamate 279 each coordinate Mn(2+). The active site involves arginine 281.

This sequence belongs to the peptidase M17 family. In terms of assembly, homohexamer. Requires Mn(2+) as cofactor.

The protein localises to the cytoplasm. It catalyses the reaction Release of an N-terminal amino acid, Xaa, from a peptide or arylamide. Xaa is preferably Glu or Asp but may be other amino acids, including Leu, Met, His, Cys and Gln.. Its function is as follows. Probably plays an important role in intracellular peptide degradation. In Escherichia coli (strain K12 / MC4100 / BW2952), this protein is Peptidase B.